The primary structure comprises 165 residues: MALGLEDKKAIVAEVNEAAKGALSAVVADSRGVTVANMTGLRKAAREAGVYIRVVRNTLVKRAVAGTDFECLSDTFTGPTLIAFSSEHPGAAARLLKDFAKAQEKFEIKAAAFEGELIPAENIDRLAKLPTYEEALAQFMMTLKEASAGKFVRTLAALRDQKEAA.

It belongs to the universal ribosomal protein uL10 family. As to quaternary structure, part of the ribosomal stalk of the 50S ribosomal subunit. The N-terminus interacts with L11 and the large rRNA to form the base of the stalk. The C-terminus forms an elongated spine to which L12 dimers bind in a sequential fashion forming a multimeric L10(L12)X complex.

In terms of biological role, forms part of the ribosomal stalk, playing a central role in the interaction of the ribosome with GTP-bound translation factors. The polypeptide is Large ribosomal subunit protein uL10 (Shewanella pealeana (strain ATCC 700345 / ANG-SQ1)).